Here is a 133-residue protein sequence, read N- to C-terminus: Large ribosomal subunit protein bL19 (133 aa).

Belongs to the bacterial ribosomal protein bL19 family.

In terms of biological role, this protein is located at the 30S-50S ribosomal subunit interface and may play a role in the structure and function of the aminoacyl-tRNA binding site. The chain is Large ribosomal subunit protein bL19 from Sulfurihydrogenibium sp. (strain YO3AOP1).